The following is a 136-amino-acid chain: Ubiquinol-cytochrome-c reductase complex assembly factor 2 (136 aa).

A mitochondrion-targeting transit peptide spans 1–13; the sequence is MAALRYRRFLKLC.

In terms of assembly, interacts with UQCC1.

Its subcellular location is the mitochondrion matrix. It is found in the mitochondrion nucleoid. The protein resides in the mitochondrion. It localises to the mitochondrion intermembrane space. The protein localises to the mitochondrion inner membrane. In terms of biological role, required for the assembly of the ubiquinol-cytochrome c reductase complex (mitochondrial respiratory chain complex III or cytochrome b-c1 complex). Plays a role in the modulation of respiratory chain activities such as oxygen consumption and ATP production and via its modulation of the respiratory chain activity can regulate skeletal muscle differentiation and insulin secretion by pancreatic beta-cells. Involved in cytochrome b translation and/or stability. The chain is Ubiquinol-cytochrome-c reductase complex assembly factor 2 (Uqcc2) from Rattus norvegicus (Rat).